Consider the following 241-residue polypeptide: MTVLIIGMGNIGKKLVELGNFEKIYAYDRISKDIPGVVRLGEFQVPSDVSTVVECASPEAVKEYSLQILKSPVNYIIISTSAFADEVFRERFFSELKNSPARVFFPSGAIGGLDVLSSIKDFVETVRIETIKPPKSLGLDLKGKTVVFEGSVEEASKLFPRNINVASTIGLIVGFEKVKVTIVADPAMDHNIHIVRISSAIGNYEFKIENIPSPENPKTSMLTVYSILRALRNLESKIVFG.

NAD(+) contacts are provided by Ala109 and Asn164. The active site involves His193.

It belongs to the L-aspartate dehydrogenase family.

The catalysed reaction is L-aspartate + NADP(+) + H2O = oxaloacetate + NH4(+) + NADPH + H(+). It carries out the reaction L-aspartate + NAD(+) + H2O = oxaloacetate + NH4(+) + NADH + H(+). It functions in the pathway cofactor biosynthesis; NAD(+) biosynthesis; iminoaspartate from L-aspartate (dehydrogenase route): step 1/1. Functionally, specifically catalyzes the NAD or NADP-dependent dehydrogenation of L-aspartate to iminoaspartate. In Thermotoga sp. (strain RQ2), this protein is L-aspartate dehydrogenase.